Here is a 142-residue protein sequence, read N- to C-terminus: Galactose-binding lectin l-1 (142 aa).

One can recognise a Galectin domain in the interval 3-134; the sequence is FVEVKNLIMK…DATVKNISVN (132 aa). Residue 68-74 participates in a beta-D-galactoside binding; the sequence is WQEEQRD. The N-linked (GlcNAc...) asparagine glycan is linked to N130.

In terms of assembly, homodimer. In terms of processing, the N-terminus is blocked. In terms of tissue distribution, skin; highest expression in that of individuals showing resistance to infectious disease.

The protein localises to the secreted. In terms of biological role, involved in host defense at the body surface. Causes agglutination of the Gram-positive bacterium S.difficile. Possesses calcium-independent hemagglutinating activity. The protein is Galactose-binding lectin l-1 of Anguilla japonica (Japanese eel).